Here is a 316-residue protein sequence, read N- to C-terminus: Probable cell division protein WhiA (316 aa).

Positions 280–313 (SLKELGEMLEPPVGKSGVNHRLRKIEKIAEELRT) form a DNA-binding region, H-T-H motif.

Belongs to the WhiA family.

Functionally, involved in cell division and chromosome segregation. This is Probable cell division protein WhiA from Clostridium perfringens (strain ATCC 13124 / DSM 756 / JCM 1290 / NCIMB 6125 / NCTC 8237 / Type A).